Consider the following 318-residue polypeptide: Extracellular metalloprotease AO090012001025 (318 aa).

Positions 1–23 are cleaved as a signal peptide; it reads MSHFPTLHILILVIANLQIQCFA. Residues asparagine 106, asparagine 121, and asparagine 193 are each glycosylated (N-linked (GlcNAc...) asparagine). Zn(2+) is bound at residue histidine 229. The active site involves glutamate 230. Histidine 233 is a Zn(2+) binding site. A disulfide bridge connects residues cysteine 268 and cysteine 295.

This sequence belongs to the peptidase M43B family.

The protein localises to the secreted. Secreted metalloproteinase that allows assimilation of proteinaceous substrates. The polypeptide is Extracellular metalloprotease AO090012001025 (Aspergillus oryzae (strain ATCC 42149 / RIB 40) (Yellow koji mold)).